The chain runs to 355 residues: Chorismate synthase (355 aa).

Arg-48 is a binding site for NADP(+). Residues 126–128, Gly-278, 293–297, and Arg-319 contribute to the FMN site; these read RSS and KPIPS.

The protein belongs to the chorismate synthase family. Homotetramer. FMNH2 serves as cofactor.

It catalyses the reaction 5-O-(1-carboxyvinyl)-3-phosphoshikimate = chorismate + phosphate. It functions in the pathway metabolic intermediate biosynthesis; chorismate biosynthesis; chorismate from D-erythrose 4-phosphate and phosphoenolpyruvate: step 7/7. Catalyzes the anti-1,4-elimination of the C-3 phosphate and the C-6 proR hydrogen from 5-enolpyruvylshikimate-3-phosphate (EPSP) to yield chorismate, which is the branch point compound that serves as the starting substrate for the three terminal pathways of aromatic amino acid biosynthesis. This reaction introduces a second double bond into the aromatic ring system. This chain is Chorismate synthase, found in Oleidesulfovibrio alaskensis (strain ATCC BAA-1058 / DSM 17464 / G20) (Desulfovibrio alaskensis).